The following is a 380-amino-acid chain: Guanine nucleotide-binding protein subunit beta (380 aa).

WD repeat units lie at residues 64 to 94 (GHSG…IVWN), 106 to 136 (LHCP…SIFN), 155 to 186 (GHKG…VLWD), 203 to 234 (GHTA…RLWD), 247 to 277 (GHED…RLFD), 296 to 326 (NELP…YVWD), and 342 to 372 (SHDG…KIWA).

It belongs to the WD repeat G protein beta family. In terms of assembly, g proteins are composed of 3 units, alpha, beta and gamma. In terms of tissue distribution, present in the root, leaf and tassel.

In terms of biological role, guanine nucleotide-binding proteins (G proteins) are involved as a modulator or transducer in various transmembrane signaling systems. The beta and gamma chains are required for the GTPase activity, for replacement of GDP by GTP, and for G protein-effector interaction. This is Guanine nucleotide-binding protein subunit beta (GB1) from Zea mays (Maize).